Consider the following 178-residue polypeptide: Large ribosomal subunit protein uL6c (178 aa).

The protein belongs to the universal ribosomal protein uL6 family. In terms of assembly, part of the 50S ribosomal subunit.

Its subcellular location is the plastid. The protein localises to the chloroplast. Its function is as follows. Binds 23S rRNA. This is Large ribosomal subunit protein uL6c (rpl6) from Phaeodactylum tricornutum (strain CCAP 1055/1).